The sequence spans 246 residues: 1-(5-phosphoribosyl)-5-[(5-phosphoribosylamino)methylideneamino] imidazole-4-carboxamide isomerase (246 aa).

D8 functions as the Proton acceptor in the catalytic mechanism. The active-site Proton donor is the D131.

It belongs to the HisA/HisF family.

It localises to the cytoplasm. The catalysed reaction is 1-(5-phospho-beta-D-ribosyl)-5-[(5-phospho-beta-D-ribosylamino)methylideneamino]imidazole-4-carboxamide = 5-[(5-phospho-1-deoxy-D-ribulos-1-ylimino)methylamino]-1-(5-phospho-beta-D-ribosyl)imidazole-4-carboxamide. It participates in amino-acid biosynthesis; L-histidine biosynthesis; L-histidine from 5-phospho-alpha-D-ribose 1-diphosphate: step 4/9. In Bordetella bronchiseptica (strain ATCC BAA-588 / NCTC 13252 / RB50) (Alcaligenes bronchisepticus), this protein is 1-(5-phosphoribosyl)-5-[(5-phosphoribosylamino)methylideneamino] imidazole-4-carboxamide isomerase.